Reading from the N-terminus, the 182-residue chain is ATP synthase subunit b 1 (182 aa).

A helical membrane pass occupies residues 24 to 44; that stretch reads FADPAFWVSIAFLMVVGFVYI.

It belongs to the ATPase B chain family. As to quaternary structure, F-type ATPases have 2 components, F(1) - the catalytic core - and F(0) - the membrane proton channel. F(1) has five subunits: alpha(3), beta(3), gamma(1), delta(1), epsilon(1). F(0) has three main subunits: a(1), b(2) and c(10-14). The alpha and beta chains form an alternating ring which encloses part of the gamma chain. F(1) is attached to F(0) by a central stalk formed by the gamma and epsilon chains, while a peripheral stalk is formed by the delta and b chains.

The protein resides in the cell inner membrane. Its function is as follows. F(1)F(0) ATP synthase produces ATP from ADP in the presence of a proton or sodium gradient. F-type ATPases consist of two structural domains, F(1) containing the extramembraneous catalytic core and F(0) containing the membrane proton channel, linked together by a central stalk and a peripheral stalk. During catalysis, ATP synthesis in the catalytic domain of F(1) is coupled via a rotary mechanism of the central stalk subunits to proton translocation. In terms of biological role, component of the F(0) channel, it forms part of the peripheral stalk, linking F(1) to F(0). This is ATP synthase subunit b 1 from Rhodospirillum rubrum (strain ATCC 11170 / ATH 1.1.1 / DSM 467 / LMG 4362 / NCIMB 8255 / S1).